Consider the following 473-residue polypeptide: Aspartyl/glutamyl-tRNA(Asn/Gln) amidotransferase subunit B (473 aa).

This sequence belongs to the GatB/GatE family. GatB subfamily. Heterotrimer of A, B and C subunits.

The catalysed reaction is L-glutamyl-tRNA(Gln) + L-glutamine + ATP + H2O = L-glutaminyl-tRNA(Gln) + L-glutamate + ADP + phosphate + H(+). It carries out the reaction L-aspartyl-tRNA(Asn) + L-glutamine + ATP + H2O = L-asparaginyl-tRNA(Asn) + L-glutamate + ADP + phosphate + 2 H(+). In terms of biological role, allows the formation of correctly charged Asn-tRNA(Asn) or Gln-tRNA(Gln) through the transamidation of misacylated Asp-tRNA(Asn) or Glu-tRNA(Gln) in organisms which lack either or both of asparaginyl-tRNA or glutaminyl-tRNA synthetases. The reaction takes place in the presence of glutamine and ATP through an activated phospho-Asp-tRNA(Asn) or phospho-Glu-tRNA(Gln). This is Aspartyl/glutamyl-tRNA(Asn/Gln) amidotransferase subunit B from Campylobacter hominis (strain ATCC BAA-381 / DSM 21671 / CCUG 45161 / LMG 19568 / NCTC 13146 / CH001A).